Here is a 122-residue protein sequence, read N- to C-terminus: Large ribosomal subunit protein bL12 (122 aa).

Belongs to the bacterial ribosomal protein bL12 family. In terms of assembly, homodimer. Part of the ribosomal stalk of the 50S ribosomal subunit. Forms a multimeric L10(L12)X complex, where L10 forms an elongated spine to which 2 to 4 L12 dimers bind in a sequential fashion. Binds GTP-bound translation factors.

Its function is as follows. Forms part of the ribosomal stalk which helps the ribosome interact with GTP-bound translation factors. Is thus essential for accurate translation. The sequence is that of Large ribosomal subunit protein bL12 from Fusobacterium nucleatum subsp. nucleatum (strain ATCC 25586 / DSM 15643 / BCRC 10681 / CIP 101130 / JCM 8532 / KCTC 2640 / LMG 13131 / VPI 4355).